The sequence spans 282 residues: 2-dehydro-3-deoxyphosphooctonate aldolase (282 aa).

This sequence belongs to the KdsA family.

It localises to the cytoplasm. The catalysed reaction is D-arabinose 5-phosphate + phosphoenolpyruvate + H2O = 3-deoxy-alpha-D-manno-2-octulosonate-8-phosphate + phosphate. The protein operates within carbohydrate biosynthesis; 3-deoxy-D-manno-octulosonate biosynthesis; 3-deoxy-D-manno-octulosonate from D-ribulose 5-phosphate: step 2/3. It functions in the pathway bacterial outer membrane biogenesis; lipopolysaccharide biosynthesis. The polypeptide is 2-dehydro-3-deoxyphosphooctonate aldolase (Shewanella oneidensis (strain ATCC 700550 / JCM 31522 / CIP 106686 / LMG 19005 / NCIMB 14063 / MR-1)).